The chain runs to 559 residues: Dihydroxy-acid dehydratase (559 aa).

[2Fe-2S] cluster is bound at residue cysteine 49. Aspartate 81 is a Mg(2+) binding site. Position 122 (cysteine 122) interacts with [2Fe-2S] cluster. Positions 123 and 124 each coordinate Mg(2+). Lysine 124 is modified (N6-carboxylysine). Cysteine 194 is a [2Fe-2S] cluster binding site. Glutamate 446 is a Mg(2+) binding site. Serine 472 (proton acceptor) is an active-site residue.

The protein belongs to the IlvD/Edd family. As to quaternary structure, homodimer. Requires [2Fe-2S] cluster as cofactor. It depends on Mg(2+) as a cofactor.

It catalyses the reaction (2R)-2,3-dihydroxy-3-methylbutanoate = 3-methyl-2-oxobutanoate + H2O. It carries out the reaction (2R,3R)-2,3-dihydroxy-3-methylpentanoate = (S)-3-methyl-2-oxopentanoate + H2O. It functions in the pathway amino-acid biosynthesis; L-isoleucine biosynthesis; L-isoleucine from 2-oxobutanoate: step 3/4. Its pathway is amino-acid biosynthesis; L-valine biosynthesis; L-valine from pyruvate: step 3/4. Its function is as follows. Functions in the biosynthesis of branched-chain amino acids. Catalyzes the dehydration of (2R,3R)-2,3-dihydroxy-3-methylpentanoate (2,3-dihydroxy-3-methylvalerate) into 2-oxo-3-methylpentanoate (2-oxo-3-methylvalerate) and of (2R)-2,3-dihydroxy-3-methylbutanoate (2,3-dihydroxyisovalerate) into 2-oxo-3-methylbutanoate (2-oxoisovalerate), the penultimate precursor to L-isoleucine and L-valine, respectively. The sequence is that of Dihydroxy-acid dehydratase from Prochlorococcus marinus subsp. pastoris (strain CCMP1986 / NIES-2087 / MED4).